A 343-amino-acid chain; its full sequence is MSAFTPASEVLLRHSDDFEQSRILFAGDLQDDLPARLDTAASRAHTQQFQHWQVLSRQMGDNARFSLVATADDVADCDTLIYYWPKNKPEAQFQLMNLLSLLPVGTDIFVVGENRSGVRSAEQMLADYAPLNKVDSARRCGLYFGRLEKQPVFDADKFWGEYSVDGLTVKTLPGVFSRDGLDVGSQLLLSTLTPHTKGKVLDVGCGAGVLSVAFARHSPKIRLTLCDVSAPAVEASRATLAANGVEGEVFASNVFSEVKGRFDMIISNPPFHDGMQTSLDAAQTLIRGAVRHLNSGGELRIVANAFLPYPDVLDETFGFHEVIAQTGRFKVYRAIMTRQAKKG.

The protein belongs to the methyltransferase superfamily. RsmC family. As to quaternary structure, monomer.

It localises to the cytoplasm. It carries out the reaction guanosine(1207) in 16S rRNA + S-adenosyl-L-methionine = N(2)-methylguanosine(1207) in 16S rRNA + S-adenosyl-L-homocysteine + H(+). Specifically methylates the guanine in position 1207 of 16S rRNA in the 30S particle. This is Ribosomal RNA small subunit methyltransferase C from Escherichia coli O157:H7.